The chain runs to 711 residues: Retrovirus-related Pol polyprotein from type-1 retrotransposable element R2 (711 aa).

The Reverse transcriptase domain occupies 45 to 323 (LHLLRGHVPT…QTFRYLGHFF (279 aa)). The segment at 444 to 711 (LFSCPSFDHL…RAVWSRQAGA (268 aa)) is nucleic acid-binding endonuclease.

The catalysed reaction is DNA(n) + a 2'-deoxyribonucleoside 5'-triphosphate = DNA(n+1) + diphosphate. This Popillia japonica (Japanese beetle) protein is Retrovirus-related Pol polyprotein from type-1 retrotransposable element R2.